Consider the following 217-residue polypeptide: Uridylate kinase (217 aa).

5–9 contributes to the ATP binding site; it reads KLTGR. Gly37 is a binding site for UMP. 2 residues coordinate ATP: Gly38 and Arg42. UMP-binding positions include Asp59 and 107–113; that span reads FQPGQST. 3 residues coordinate ATP: Asn134, Tyr139, and Asp142.

It belongs to the UMP kinase family. In terms of assembly, homohexamer.

Its subcellular location is the cytoplasm. The enzyme catalyses UMP + ATP = UDP + ADP. Its pathway is pyrimidine metabolism; CTP biosynthesis via de novo pathway; UDP from UMP (UMPK route): step 1/1. Inhibited by UTP. Catalyzes the reversible phosphorylation of UMP to UDP. This Pyrobaculum calidifontis (strain DSM 21063 / JCM 11548 / VA1) protein is Uridylate kinase.